A 138-amino-acid chain; its full sequence is Large ribosomal subunit protein uL16c (138 aa).

Belongs to the universal ribosomal protein uL16 family. In terms of assembly, part of the 50S ribosomal subunit.

The protein localises to the plastid. The protein resides in the chloroplast. The sequence is that of Large ribosomal subunit protein uL16c from Tetradesmus obliquus (Green alga).